The following is a 348-amino-acid chain: Xaa-Pro dipeptidase (348 aa).

Co(2+) is bound by residues Asp209, Asp220, His284, Glu313, and Glu327.

This sequence belongs to the peptidase M24B family. Archaeal-type prolidase subfamily. In terms of assembly, homodimer. Co(2+) serves as cofactor. The cofactor is Mn(2+).

The protein resides in the cytoplasm. It catalyses the reaction Xaa-L-Pro dipeptide + H2O = an L-alpha-amino acid + L-proline. Splits dipeptides with a prolyl in the C-terminal position and a nonpolar amino acid at the N-terminal position. The protein is Xaa-Pro dipeptidase (pepQ) of Pyrococcus furiosus (strain ATCC 43587 / DSM 3638 / JCM 8422 / Vc1).